The sequence spans 134 residues: MVSAFNTGRTDDVDEYIHPDYLNPATLEHGIHTGPKAFAQLVGWVRATFSEEARLEEVRIEERGPWVKAYLVLYGRHVGRLVGMPPTDRRFSGEQVHLMRIVDGKIRDHRDWPDFQGTLRQLGDPWPDDEGWRP.

A nogalaviketone-binding site is contributed by glutamine 95. The active-site Proton donor/acceptor is the aspartate 111.

This sequence belongs to the polyketide cyclase DnrD family. In terms of assembly, homotetramer. Dimer of dimers.

The catalysed reaction is nogalaviketone = methyl nogalonate. Its pathway is antibiotic biosynthesis. In terms of biological role, involved in the biosynthesis of the aromatic polyketide antibiotic nogalamycin. Catalyzes the formation of nogalaviketone from nogalonic acid methyl ester (NAME), the last ring-closure step in the biosynthesis of nogalamycin. This chain is Nogalonic acid methyl ester cyclase, found in Streptomyces nogalater.